Reading from the N-terminus, the 72-residue chain is MATGWVVLIAVIALLVGAAGGFFLARKYMQDYFKKNPPVNEDMLRMMMASMGQKPSEKKVRQMMQQMKNQGK.

A helical membrane pass occupies residues 4–26; the sequence is GWVVLIAVIALLVGAAGGFFLAR.

Belongs to the UPF0154 family.

The protein resides in the membrane. This chain is UPF0154 protein EF_1734, found in Enterococcus faecalis (strain ATCC 700802 / V583).